We begin with the raw amino-acid sequence, 371 residues long: Queuine tRNA-ribosyltransferase (371 aa).

The Proton acceptor role is filled by aspartate 90. Residues 90-94 (DSGGF), aspartate 144, glutamine 189, and glycine 215 each bind substrate. The segment at 246-252 (GVGTPEN) is RNA binding. The active-site Nucleophile is the aspartate 265. Residues 270–274 (TRNAR) are RNA binding; important for wobble base 34 recognition. Cysteine 303, cysteine 305, cysteine 308, and histidine 334 together coordinate Zn(2+).

This sequence belongs to the queuine tRNA-ribosyltransferase family. As to quaternary structure, homodimer. Within each dimer, one monomer is responsible for RNA recognition and catalysis, while the other monomer binds to the replacement base PreQ1. Requires Zn(2+) as cofactor.

The enzyme catalyses 7-aminomethyl-7-carbaguanine + guanosine(34) in tRNA = 7-aminomethyl-7-carbaguanosine(34) in tRNA + guanine. It functions in the pathway tRNA modification; tRNA-queuosine biosynthesis. Its function is as follows. Catalyzes the base-exchange of a guanine (G) residue with the queuine precursor 7-aminomethyl-7-deazaguanine (PreQ1) at position 34 (anticodon wobble position) in tRNAs with GU(N) anticodons (tRNA-Asp, -Asn, -His and -Tyr). Catalysis occurs through a double-displacement mechanism. The nucleophile active site attacks the C1' of nucleotide 34 to detach the guanine base from the RNA, forming a covalent enzyme-RNA intermediate. The proton acceptor active site deprotonates the incoming PreQ1, allowing a nucleophilic attack on the C1' of the ribose to form the product. After dissociation, two additional enzymatic reactions on the tRNA convert PreQ1 to queuine (Q), resulting in the hypermodified nucleoside queuosine (7-(((4,5-cis-dihydroxy-2-cyclopenten-1-yl)amino)methyl)-7-deazaguanosine). This Helicobacter pylori (strain Shi470) protein is Queuine tRNA-ribosyltransferase.